The following is a 107-amino-acid chain: SFAGLKDADVAAALAACSAADSFKHKEFFAKVGLASKSLDDVKKAFYVIDQDKSGFIEEDELKLFLQNFSPSARALTDAETKAFLADGDKDGDGMIGVDEFAAMIKA.

Ser1 bears the N-acetylserine mark. 2 consecutive EF-hand domains span residues 37 to 72 and 76 to 107; these read KSLD…FSPS and LTDA…MIKA. Asp50, Asp52, Ser54, Phe56, Glu58, Glu61, Asp89, Asp91, Asp93, Met95, and Glu100 together coordinate Ca(2+).

The protein belongs to the parvalbumin family.

Its function is as follows. In muscle, parvalbumin is thought to be involved in relaxation after contraction. It binds two calcium ions. In Esox lucius (Northern pike), this protein is Parvalbumin beta.